Consider the following 150-residue polypeptide: Deoxyuridine 5'-triphosphate nucleotidohydrolase (150 aa).

Substrate-binding positions include 65 to 67 (RSG), Asn78, and 82 to 84 (TID). The disordered stretch occupies residues 130-150 (LSDTERGEGGFGHTGVASKAE).

Belongs to the dUTPase family. Requires Mg(2+) as cofactor.

It catalyses the reaction dUTP + H2O = dUMP + diphosphate + H(+). Its pathway is pyrimidine metabolism; dUMP biosynthesis; dUMP from dCTP (dUTP route): step 2/2. This enzyme is involved in nucleotide metabolism: it produces dUMP, the immediate precursor of thymidine nucleotides and it decreases the intracellular concentration of dUTP so that uracil cannot be incorporated into DNA. The sequence is that of Deoxyuridine 5'-triphosphate nucleotidohydrolase from Chlorobaculum parvum (strain DSM 263 / NCIMB 8327) (Chlorobium vibrioforme subsp. thiosulfatophilum).